The sequence spans 242 residues: MYGSEGGAMRIVAGVGENRNMERAASLADFEVDLVHSEEEFIEELRRGAAAYVRGSLPAANIMAELKKGGPLNRASWIEVGANGFLLAPVGIDEGRTVDDRFKIAVSASEFLRKTGEEPRVGVISGGRRGDLGRSPEVDRSIHEGEFLTSMIKDKYRVRHYHILIEEAVADGCNVIIAPDGITGNLIFRSLVLVGTARSYGAVALGFDGIFVDTSRSQTAEGYLRALKFAHWLARGWNEDNE.

Belongs to the MtxX family.

This is an uncharacterized protein from Methanothermobacter thermautotrophicus (strain ATCC 29096 / DSM 1053 / JCM 10044 / NBRC 100330 / Delta H) (Methanobacterium thermoautotrophicum).